The following is a 124-amino-acid chain: Fluoride-specific ion channel FluC (124 aa).

4 consecutive transmembrane segments (helical) span residues 4-24 (FLAVGFGAAVGAWLRWGLGLW), 34-54 (LGTLAANVIGGYFIGLVLAWF), 67-87 (FVITGLLGGLTTFSTFSAEVV), and 100-120 (LIAFAHLAGSFIATGLGFYSL). Na(+)-binding residues include Gly74 and Thr77.

The protein belongs to the fluoride channel Fluc/FEX (TC 1.A.43) family.

It is found in the cell inner membrane. The enzyme catalyses fluoride(in) = fluoride(out). With respect to regulation, na(+) is not transported, but it plays an essential structural role and its presence is essential for fluoride channel function. Fluoride-specific ion channel. Important for reducing fluoride concentration in the cell, thus reducing its toxicity. The chain is Fluoride-specific ion channel FluC from Thiobacillus denitrificans (strain ATCC 25259 / T1).